We begin with the raw amino-acid sequence, 287 residues long: Nucleoid occlusion protein (287 aa).

The segment at residues 146-165 (EALAQRVGKSQSAIANKMRL) is a DNA-binding region (H-T-H motif).

This sequence belongs to the ParB family.

It is found in the cytoplasm. The protein resides in the nucleoid. Effects nucleoid occlusion by binding relatively nonspecifically to DNA and preventing the assembly of the division machinery in the vicinity of the nucleoid, especially under conditions that disturb the cell cycle. It helps to coordinate cell division and chromosome segregation by preventing the formation of the Z ring through the nucleoid, which would cause chromosome breakage. The polypeptide is Nucleoid occlusion protein (Listeria monocytogenes serotype 4a (strain HCC23)).